A 375-amino-acid polypeptide reads, in one-letter code: 23S rRNA (uracil(747)-C(5))-methyltransferase RlmC (375 aa).

[4Fe-4S] cluster-binding residues include C3, C11, C14, and C87. 4 residues coordinate S-adenosyl-L-methionine: Q212, F241, E262, and N307. C334 functions as the Nucleophile in the catalytic mechanism.

The protein belongs to the class I-like SAM-binding methyltransferase superfamily. RNA M5U methyltransferase family. RlmC subfamily.

The catalysed reaction is uridine(747) in 23S rRNA + S-adenosyl-L-methionine = 5-methyluridine(747) in 23S rRNA + S-adenosyl-L-homocysteine + H(+). In terms of biological role, catalyzes the formation of 5-methyl-uridine at position 747 (m5U747) in 23S rRNA. This is 23S rRNA (uracil(747)-C(5))-methyltransferase RlmC from Cronobacter sakazakii (strain ATCC BAA-894) (Enterobacter sakazakii).